The chain runs to 74 residues: U4-theraphotoxin-Cg1a (74 aa).

Residues 1-19 form the signal peptide; it reads MNATIFALLLLLNLAMYNA. Residues 20 to 39 constitute a propeptide that is removed on maturation; that stretch reads AEQSSETDMDDTLLIPEINR. Disulfide bonds link cysteine 42/cysteine 56, cysteine 49/cysteine 61, and cysteine 55/cysteine 71.

This sequence belongs to the neurotoxin 36 family. 01 subfamily. Expressed by the venom gland.

It is found in the secreted. In terms of biological role, probable ion channel inhibitor. This Chilobrachys guangxiensis (Chinese earth tiger tarantula) protein is U4-theraphotoxin-Cg1a.